Consider the following 566-residue polypeptide: Mucin-21 (566 aa).

Positions 1 to 24 (MKMQKGNVLLMFGLLLHLEAATNS) are cleaved as a signal peptide. Asn-25 carries an N-linked (GlcNAc...) asparagine glycan. Residues 25-68 (NETSTSANTGSSVISSGASTATNSGSSVTSSGVSTATISGSSVT) form a disordered region. Residues 25–479 (NETSTSANTG…KPGGSLVPWE (455 aa)) are Extracellular-facing. 28 repeat units span residues 31-44 (ANTG…GAST), 45-59 (ATNS…GVST), 60-74 (ATIS…GVSI), 75-89 (VTNS…GIST), 90-104 (ATNS…GISI), 105-119 (ATNS…GAST), 120-134 (ATNS…GAST), 135-149 (ATNS…GAST), 150-164 (ATNS…EAST), 165-179 (ATNS…GAST), 180-194 (ATNS…RAST), 195-209 (ATNS…GAST), 210-224 (ATNS…GAGT), 225-239 (ATNS…GAST), 244-254 (ESSTPSSGAGT), 255-269 (ATNS…GAGT), 270-284 (ATNS…GIST), 285-299 (VTNS…GANT), 300-314 (ATNS…GANT), 315-329 (ATNS…GAST), 330-344 (ATNS…GAST), 345-359 (ATNS…GAST), 360-374 (ATNS…GTST), 375-389 (ATNS…GAST), 390-404 (ATTS…GAST), 405-419 (ATNS…GAST), 420-434 (ATNS…GANT), and 435-449 (ATNS…GSGT). Residues 31 to 435 (ANTGSSVISS…STTSSGANTA (405 aa)) form a 28 X 15 AA approximate tandem repeats region. Positions 106–456 (TNSESSTTSS…SGTAALTGMH (351 aa)) are disordered. Residues 480–500 (IFLITLVSVVAAVGLFAGLFF) form a helical membrane-spanning segment. The Cytoplasmic segment spans residues 501–566 (CVRNSLSLRN…MEMSGRNSGP (66 aa)). The cytoplasmic tail stretch occupies residues 521–566 (GLNHGLGPGPGGNHGAPHRPRWSPNWFWRRPVSSIAMEMSGRNSGP).

Post-translationally, O-glycosylated. In terms of tissue distribution, expressed in lung, large intestine, thymus, and testis. Expressed in normal and malignant bronchial epithelial cells.

The protein localises to the cell membrane. In Homo sapiens (Human), this protein is Mucin-21 (MUC21).